The primary structure comprises 138 residues: Nucleoside diphosphate kinase (138 aa).

6 residues coordinate ATP: K9, F57, R85, T91, R102, and N112. H115 functions as the Pros-phosphohistidine intermediate in the catalytic mechanism.

The protein belongs to the NDK family. Homotetramer. The cofactor is Mg(2+).

It localises to the cytoplasm. The catalysed reaction is a 2'-deoxyribonucleoside 5'-diphosphate + ATP = a 2'-deoxyribonucleoside 5'-triphosphate + ADP. The enzyme catalyses a ribonucleoside 5'-diphosphate + ATP = a ribonucleoside 5'-triphosphate + ADP. In terms of biological role, major role in the synthesis of nucleoside triphosphates other than ATP. The ATP gamma phosphate is transferred to the NDP beta phosphate via a ping-pong mechanism, using a phosphorylated active-site intermediate. The protein is Nucleoside diphosphate kinase of Desulforapulum autotrophicum (strain ATCC 43914 / DSM 3382 / VKM B-1955 / HRM2) (Desulfobacterium autotrophicum).